Reading from the N-terminus, the 101-residue chain is uncharacterized protein (101 aa).

Over residues 65–79 the composition is skewed to low complexity; that stretch reads QEAAAPAGPQEPAEA. The disordered stretch occupies residues 65–101; that stretch reads QEAAAPAGPQEPAEASGDAGKKEEVEEEEIEIDFGMF. The segment covering 89-101 has biased composition (acidic residues); that stretch reads VEEEEIEIDFGMF.

This is an uncharacterized protein from Encephalitozoon cuniculi (strain GB-M1) (Microsporidian parasite).